The primary structure comprises 55 residues: Large ribosomal subunit protein bL33 (55 aa).

It belongs to the bacterial ribosomal protein bL33 family.

The sequence is that of Large ribosomal subunit protein bL33 from Bartonella quintana (strain Toulouse) (Rochalimaea quintana).